Consider the following 391-residue polypeptide: D-xylose 1-dehydrogenase (NADP(+)) (391 aa).

The protein belongs to the Gfo/Idh/MocA family.

It carries out the reaction D-xylose + NADP(+) = D-xylono-1,5-lactone + NADPH + H(+). In terms of biological role, NADP-dependent D-xylose dehydrogenase catalyzing the oxydation of D-xylose into D-xylonolactone. Also displays some, albeit lower activity with D-glucose, D-galactose and L-arabinose as substrate. Probably not involved in D-xylose degradation, as it has been shown that H.jecorina assimilates D-xylose via D-xylose reductase and xylitol dehydrogenase, and it is unable to grow on D-xylonic acid as sole carbon source. May play a role in the regeneration of NADP(+) in the presence of D-xylose. This chain is D-xylose 1-dehydrogenase (NADP(+)), found in Hypocrea jecorina (strain ATCC 56765 / BCRC 32924 / NRRL 11460 / Rut C-30) (Trichoderma reesei).